Consider the following 66-residue polypeptide: Ranalexin (66 aa).

The signal sequence occupies residues 1 to 20; it reads MFTLKKSLLLLFFLGTINLS. Positions 21–44 are cleaved as a propeptide — small acidic peptide; it reads LCEEERNAEEERRDNPDERDVEVE. An intrachain disulfide couples Cys60 to Cys66.

This sequence belongs to the frog skin active peptide (FSAP) family. Brevinin subfamily. In terms of tissue distribution, expressed by the skin dorsal glands.

It is found in the secreted. Its function is as follows. Potent microbicidal activity, active against S.aureus and E.coli. It also acts as a membrane-disruptive agent at higher concentrations. This is Ranalexin from Aquarana catesbeiana (American bullfrog).